The sequence spans 804 residues: Leucine--tRNA ligase (804 aa).

The 'HIGH' region motif lies at 39–50; the sequence is PFPSGKGLHVGH. The short motif at 573–577 is the 'KMSKS' region element; sequence KMSKS. Residue Lys-576 participates in ATP binding.

The protein belongs to the class-I aminoacyl-tRNA synthetase family.

It localises to the cytoplasm. The enzyme catalyses tRNA(Leu) + L-leucine + ATP = L-leucyl-tRNA(Leu) + AMP + diphosphate. This is Leucine--tRNA ligase from Lactobacillus johnsonii (strain CNCM I-12250 / La1 / NCC 533).